A 255-amino-acid chain; its full sequence is tRNA pseudouridine synthase A (255 aa).

Asp60 serves as the catalytic Nucleophile. Residue Tyr118 participates in substrate binding.

It belongs to the tRNA pseudouridine synthase TruA family. As to quaternary structure, homodimer.

It catalyses the reaction uridine(38/39/40) in tRNA = pseudouridine(38/39/40) in tRNA. Formation of pseudouridine at positions 38, 39 and 40 in the anticodon stem and loop of transfer RNAs. This Leuconostoc mesenteroides subsp. mesenteroides (strain ATCC 8293 / DSM 20343 / BCRC 11652 / CCM 1803 / JCM 6124 / NCDO 523 / NBRC 100496 / NCIMB 8023 / NCTC 12954 / NRRL B-1118 / 37Y) protein is tRNA pseudouridine synthase A.